A 728-amino-acid polypeptide reads, in one-letter code: Golgin subfamily A member 5 (728 aa).

An N-acetylserine modification is found at S2. The Cytoplasmic segment spans residues 2–695; that stretch reads SWFADLAGRA…IFLRRYPIAR (694 aa). Dimethylated arginine occurs at positions 27 and 89. The tract at residues 88 to 202 is disordered; sequence SRTGGDASHP…KKSTEESTVS (115 aa). S116 carries the phosphoserine modification. Over residues 134–146 the composition is skewed to basic and acidic residues; sequence PTGRVEIKKEKGK. Residues 152–167 show a composition bias toward low complexity; the sequence is SSQSSAVSSVTTSVTT. Polar residues predominate over residues 173–187; that stretch reads ENSGSQSPEVSSSDS. The stretch at 216-628 forms a coiled coil; sequence GSMSHELSNL…LEQQLHSAAT (413 aa). The helical; Anchor for type IV membrane protein transmembrane segment at 696 to 716 threads the bilayer; the sequence is VFVIIYMALLHLWVMIVLLTY. Residues 717–728 lie on the Lumenal side of the membrane; it reads SPEMHHDQPYGK.

Homodimer. Interacts with RAB1A that has been activated by GTP-binding. Interacts with isoform CASP of CUX1. In terms of processing, highly phosphorylated during mitosis. Phosphorylation is barely detectable during interphase.

It localises to the golgi apparatus membrane. Functionally, involved in maintaining Golgi structure. Stimulates the formation of Golgi stacks and ribbons. Involved in intra-Golgi retrograde transport. The polypeptide is Golgin subfamily A member 5 (Golga5) (Rattus norvegicus (Rat)).